The chain runs to 349 residues: UDP-N-acetylenolpyruvoylglucosamine reductase (349 aa).

An FAD-binding PCMH-type domain is found at 26–197 (FDARARVAAR…VAVTFRLPKA (172 aa)). R173 is a catalytic residue. The active-site Proton donor is the S249. The active site involves E345.

Belongs to the MurB family. It depends on FAD as a cofactor.

The protein resides in the cytoplasm. The enzyme catalyses UDP-N-acetyl-alpha-D-muramate + NADP(+) = UDP-N-acetyl-3-O-(1-carboxyvinyl)-alpha-D-glucosamine + NADPH + H(+). The protein operates within cell wall biogenesis; peptidoglycan biosynthesis. Functionally, cell wall formation. The sequence is that of UDP-N-acetylenolpyruvoylglucosamine reductase from Burkholderia pseudomallei (strain K96243).